The chain runs to 874 residues: Probable inorganic carbon transporter subunit DabA (874 aa).

Positions 398, 400, 580, and 595 each coordinate Zn(2+).

It belongs to the inorganic carbon transporter (TC 9.A.2) DabA family. In terms of assembly, forms a complex with DabB. Zn(2+) serves as cofactor.

Its subcellular location is the cell membrane. Part of an energy-coupled inorganic carbon pump. The chain is Probable inorganic carbon transporter subunit DabA from Bacillus cereus (strain 03BB102).